An 86-amino-acid chain; its full sequence is Apolipoprotein C-I (86 aa).

Positions 1–26 are cleaved as a signal peptide; it reads MRLFLSLPVLVVVLLMILEGPGPAQG.

This sequence belongs to the apolipoprotein C1 family.

Its subcellular location is the secreted. In terms of biological role, inhibitor of lipoprotein binding to the low density lipoprotein (LDL) receptor, LDL receptor-related protein, and very low density lipoprotein (VLDL) receptor. Associates with high density lipoproteins (HDL) and the triacylglycerol-rich lipoproteins in the plasma and makes up about 10% of the protein of the VLDL and 2% of that of HDL. Appears to interfere directly with fatty acid uptake and is also the major plasma inhibitor of cholesteryl ester transfer protein (CETP). Binds free fatty acids and reduces their intracellular esterification. Modulates the interaction of APOE with beta-migrating VLDL and inhibits binding of beta-VLDL to the LDL receptor-related protein. The chain is Apolipoprotein C-I (APOC1) from Ateles geoffroyi (Black-handed spider monkey).